Reading from the N-terminus, the 172-residue chain is Protein-export protein SecB (172 aa).

The interval 152-172 is disordered; that stretch reads AQGAEGGNSGIVMPDGSQARH.

The protein belongs to the SecB family. As to quaternary structure, homotetramer, a dimer of dimers. One homotetramer interacts with 1 SecA dimer.

The protein localises to the cytoplasm. One of the proteins required for the normal export of preproteins out of the cell cytoplasm. It is a molecular chaperone that binds to a subset of precursor proteins, maintaining them in a translocation-competent state. It also specifically binds to its receptor SecA. This Cupriavidus taiwanensis (strain DSM 17343 / BCRC 17206 / CCUG 44338 / CIP 107171 / LMG 19424 / R1) (Ralstonia taiwanensis (strain LMG 19424)) protein is Protein-export protein SecB.